Reading from the N-terminus, the 151-residue chain is Large ribosomal subunit protein bL9 (151 aa).

Belongs to the bacterial ribosomal protein bL9 family.

Binds to the 23S rRNA. The protein is Large ribosomal subunit protein bL9 of Kosmotoga olearia (strain ATCC BAA-1733 / DSM 21960 / TBF 19.5.1).